The following is a 407-amino-acid chain: Venom metalloproteinase 3 (407 aa).

Asparagine 42, asparagine 91, asparagine 126, and asparagine 166 each carry an N-linked (GlcNAc...) asparagine glycan. Residues 191 to 405 (FYPKLLVLVD…TSAACLKDTY (215 aa)) enclose the Peptidase M12B domain. Cystine bridges form between cysteine 317/cysteine 400 and cysteine 356/cysteine 384. Zn(2+) is bound at residue histidine 340. Glutamate 341 is an active-site residue. Positions 344 and 350 each coordinate Zn(2+). A glycan (N-linked (GlcNAc...) asparagine) is linked at asparagine 391.

In the C-terminal section; belongs to the venom metalloproteinase (M12B) family. As to quaternary structure, monomer. Zn(2+) is required as a cofactor. In terms of tissue distribution, expressed by the venom gland.

The protein localises to the secreted. With respect to regulation, the gelatinase activity is inhibited by EDTA. The recombinant protein has gelatinase activity. In vivo, injection of this recombinant into fifth instar L.oleracea (host) larvae results in partial insect mortality associated with the molt to sixth instar, with surviving insects showing retarded development and growth. This Eulophus pennicornis (Parasitoid wasp) protein is Venom metalloproteinase 3.